Here is a 380-residue protein sequence, read N- to C-terminus: 1-deoxy-D-xylulose 5-phosphate reductoisomerase 2 (380 aa).

Positions 10, 11, 12, 13, 36, 37, 38, and 120 each coordinate NADPH. Position 121 (K121) interacts with 1-deoxy-D-xylulose 5-phosphate. Position 122 (E122) interacts with NADPH. D146 contributes to the Mn(2+) binding site. 1-deoxy-D-xylulose 5-phosphate is bound by residues S147, E148, S172, and H195. Mn(2+) is bound at residue E148. An NADPH-binding site is contributed by G201. S208, N213, K214, and E217 together coordinate 1-deoxy-D-xylulose 5-phosphate. Mn(2+) is bound at residue E217.

This sequence belongs to the DXR family. Mg(2+) serves as cofactor. It depends on Mn(2+) as a cofactor.

The enzyme catalyses 2-C-methyl-D-erythritol 4-phosphate + NADP(+) = 1-deoxy-D-xylulose 5-phosphate + NADPH + H(+). Its pathway is isoprenoid biosynthesis; isopentenyl diphosphate biosynthesis via DXP pathway; isopentenyl diphosphate from 1-deoxy-D-xylulose 5-phosphate: step 1/6. Its function is as follows. Catalyzes the NADPH-dependent rearrangement and reduction of 1-deoxy-D-xylulose-5-phosphate (DXP) to 2-C-methyl-D-erythritol 4-phosphate (MEP). The protein is 1-deoxy-D-xylulose 5-phosphate reductoisomerase 2 of Bacillus anthracis.